Here is a 215-residue protein sequence, read N- to C-terminus: Probable phosphoglycerate mutase GpmB (215 aa).

Residues arginine 8–asparagine 15, glutamine 21–glycine 22, arginine 58, glutamate 82–methionine 85, arginine 104–arginine 105, and glycine 151–methionine 152 contribute to the substrate site. Residue histidine 9 is the Tele-phosphohistidine intermediate of the active site. The active-site Proton donor/acceptor is the glutamate 82.

Belongs to the phosphoglycerate mutase family. GpmB subfamily.

The enzyme catalyses (2R)-2-phosphoglycerate = (2R)-3-phosphoglycerate. It functions in the pathway carbohydrate degradation; glycolysis; pyruvate from D-glyceraldehyde 3-phosphate: step 3/5. The chain is Probable phosphoglycerate mutase GpmB from Cronobacter sakazakii (strain ATCC BAA-894) (Enterobacter sakazakii).